The chain runs to 546 residues: Tryptophan biosynthesis protein TrpCD (546 aa).

The tract at residues 1-226 (MMDFGFVDSL…FVQTVCGGEK (226 aa)) is indole-3-glycerol phosphate synthase. Positions 227–546 (MIEDVLRGLD…EEIACKSTSM (320 aa)) are anthranilate phosphoribosyltransferase. 5-phospho-alpha-D-ribose 1-diphosphate-binding positions include Gly295, 298–299 (GD), Ser303, 305–308 (NVST), 322–330 (KHGNRAVSS), and Ser334. An anthranilate-binding site is contributed by Gly295. Ser307 is a binding site for Mg(2+). Asn325 provides a ligand contact to anthranilate. Arg380 contributes to the anthranilate binding site. Residues Asp437 and Glu438 each contribute to the Mg(2+) site.

It in the N-terminal section; belongs to the TrpC family. This sequence in the C-terminal section; belongs to the anthranilate phosphoribosyltransferase family. It depends on Mg(2+) as a cofactor.

The enzyme catalyses 1-(2-carboxyphenylamino)-1-deoxy-D-ribulose 5-phosphate + H(+) = (1S,2R)-1-C-(indol-3-yl)glycerol 3-phosphate + CO2 + H2O. It catalyses the reaction N-(5-phospho-beta-D-ribosyl)anthranilate + diphosphate = 5-phospho-alpha-D-ribose 1-diphosphate + anthranilate. It functions in the pathway amino-acid biosynthesis; L-tryptophan biosynthesis; L-tryptophan from chorismate: step 2/5. It participates in amino-acid biosynthesis; L-tryptophan biosynthesis; L-tryptophan from chorismate: step 4/5. Its function is as follows. Bifunctional enzyme that catalyzes the second and fourth steps of tryptophan biosynthetic pathway. The second step is catalyzed by the anthranilate phosphoribosyltransferase, coded by the TrpD domain and the fourth step is catalyzed by indole-3-glycerol phosphate synthase, coded by the TrpC domain. This Archaeoglobus fulgidus (strain ATCC 49558 / DSM 4304 / JCM 9628 / NBRC 100126 / VC-16) protein is Tryptophan biosynthesis protein TrpCD (trpCD).